Reading from the N-terminus, the 128-residue chain is Regulator of ribonuclease activity B (128 aa).

Belongs to the RraB family. Interacts with the C-terminal region of Rne.

Its subcellular location is the cytoplasm. Its function is as follows. Globally modulates RNA abundance by binding to RNase E (Rne) and regulating its endonucleolytic activity. Can modulate Rne action in a substrate-dependent manner by altering the composition of the degradosome. The polypeptide is Regulator of ribonuclease activity B (Idiomarina loihiensis (strain ATCC BAA-735 / DSM 15497 / L2-TR)).